Reading from the N-terminus, the 241-residue chain is Terpene cyclase olcD (241 aa).

The next 7 membrane-spanning stretches (helical) occupy residues 19-39 (LSDI…FATI), 49-71 (WMPL…LYPP), 76-95 (ILGF…LRFA), 108-128 (YLPV…LALI), 137-157 (FYYG…SGLV), 166-186 (SYTI…GLFF), and 202-222 (LMRW…VQFW).

This sequence belongs to the paxB family.

The protein localises to the membrane. It functions in the pathway secondary metabolite biosynthesis; terpenoid biosynthesis. Its function is as follows. Terpene cyclase; part of the gene cluster that mediates the biosynthesis of 15-deoxyoxalicine B. The first step of the pathway is the synthesis of nicotinyl-CoA from nicotinic acid by the nicotinic acid-CoA ligase olcI. Nicotinyl-CoA is then a substrate of polyketide synthase olcA to produce 4-hydroxy-6-(3-pyridinyl)-2H-pyran-2-one (HPPO) which is further prenylated by the polyprenyl transferase olcH to yield geranylgeranyl-HPPO. Geranylgeranyl pyrophosphate is provided by the cluster-specific geranylgeranyl pyrophosphate synthase olcC. The FAD-dependent monooxygenase olcE catalyzes the epoxidation of geranylgeranyl-HPPO and the terpene cyclase olcD catalyzes the cyclization of the terpenoid component, resulting in the formation of the tricyclic terpene moiety seen in predecaturin E. The cytochrome P450 monooxygenase then catalyzes the allylic oxidation of predecaturin E, which is followed by spirocylization with concomitant loss of one molecule of water to form decaturin E. Decaturin E is the substrate of the cytochrome P450 monooxygenase olcJ which hydroxylates it at the C-29 position to form decaturin F. The short-chain dehydrogenase/reductase olcF may catalyze the oxidation of decaturin F to generate the 29-hydroxyl-27-one intermediate, and subsequent hemiacetal formation probably leads to the formation of decaturin C. The dioxygenase olcK may be a peroxisomal enzyme that catalyzes the hydroxylation of decaturin C into decaturin A once decaturin C is shuttled into the peroxisome by the MFS transporter olcL. Finally the cytochrome P450 monooxygenase olcB catalyzes the oxidative rearrangement to yield 15-deoxyoxalicine B. In the absence of olcJ, decaturin E may be shunted to a pathway in which it is oxidized to a ketone, possibly by olcF, to form decaturin D, which undergoes further allylic oxidation to yield decaturin G. Moreover, in the absence of oclK or oclL, oclB can convert decaturin C into 15-deoxyoxalicine A. This chain is Terpene cyclase olcD, found in Penicillium canescens.